Here is a 389-residue protein sequence, read N- to C-terminus: Succinate--CoA ligase [ADP-forming] subunit beta (389 aa).

Residues 9–244 form the ATP-grasp domain; that stretch reads KKLFADYGLP…LTQEDPREAE (236 aa). ATP contacts are provided by residues K46, 53-55, E99, A102, and E107; that span reads GRG. The Mg(2+) site is built by N199 and D213. Residues N264 and 321–323 contribute to the substrate site; that span reads GIV.

Belongs to the succinate/malate CoA ligase beta subunit family. Heterotetramer of two alpha and two beta subunits. Requires Mg(2+) as cofactor.

It catalyses the reaction succinate + ATP + CoA = succinyl-CoA + ADP + phosphate. The enzyme catalyses GTP + succinate + CoA = succinyl-CoA + GDP + phosphate. Its pathway is carbohydrate metabolism; tricarboxylic acid cycle; succinate from succinyl-CoA (ligase route): step 1/1. Succinyl-CoA synthetase functions in the citric acid cycle (TCA), coupling the hydrolysis of succinyl-CoA to the synthesis of either ATP or GTP and thus represents the only step of substrate-level phosphorylation in the TCA. The beta subunit provides nucleotide specificity of the enzyme and binds the substrate succinate, while the binding sites for coenzyme A and phosphate are found in the alpha subunit. This Histophilus somni (strain 2336) (Haemophilus somnus) protein is Succinate--CoA ligase [ADP-forming] subunit beta.